A 339-amino-acid chain; its full sequence is MADLKPYIAKAASGEPLSLGDAKAAFDIMMSGQATPSQIGGFLMALRVRGETVPEIAGAVASMRSRMIPVIAPDDAMDIVGTGGDQSGSYNVSSCTAFVVAGAGVPVAKHGNRALSSRSGAADTLAALGINIEADADTIGRSISEAGLGFMFAPMHHSAMRHVGPSRVELGTRTIFNLLGPLSNPASVKRQLVGVFAPQWLEPLAHVLKELGSETAWVVYGDGLDEMTTAGTTQVAALENGQIRTFEITPEEVGLRRCSPAELKGGEAAENAKALLGVLEDKDSAYRDIVLLNSGAALVVAGKAENLKDGIAQAVQSIDSGAALAVLQKVIAVSNDKPA.

5-phospho-alpha-D-ribose 1-diphosphate is bound by residues Gly-81, 84–85 (GD), Ser-89, 91–94 (NVSS), 109–117 (KHGNRALSS), and Ala-121. Residue Gly-81 participates in anthranilate binding. Residue Ser-93 participates in Mg(2+) binding. Asn-112 lines the anthranilate pocket. Residue Arg-167 coordinates anthranilate. Mg(2+) contacts are provided by Asp-225 and Glu-226.

The protein belongs to the anthranilate phosphoribosyltransferase family. Homodimer. It depends on Mg(2+) as a cofactor.

The enzyme catalyses N-(5-phospho-beta-D-ribosyl)anthranilate + diphosphate = 5-phospho-alpha-D-ribose 1-diphosphate + anthranilate. It participates in amino-acid biosynthesis; L-tryptophan biosynthesis; L-tryptophan from chorismate: step 2/5. In terms of biological role, catalyzes the transfer of the phosphoribosyl group of 5-phosphorylribose-1-pyrophosphate (PRPP) to anthranilate to yield N-(5'-phosphoribosyl)-anthranilate (PRA). This Brucella suis (strain ATCC 23445 / NCTC 10510) protein is Anthranilate phosphoribosyltransferase.